The sequence spans 524 residues: MAGVSYAAPWWVSLLHRLPHFDLRWEATSSQFRPEDADYQQALLLLGATALACLALDLLFLLFYSFWLCCRRRKTDEHLDADCCCTAWCVIITTLVCSAGIAVGFYGNGETSDGIHRATYSLRHANRTVAGVQDRVWDTAAALNRTAEPNLQSLERQLAGRQEPLRAVQRLQTLLGTLLGYTAAIPFWRNPGVSLEVLAEQVDLYDWYRWLGYLGLLLLDVIICLLVLVGLIRSSKGILVGVCLLGVLALVISWGALGLELAVSVGSSDFCVDPDTFVTKMVEEHSVLSGDILQYYLACSPRATNPFQQKLSGSHKALVEMQDVVAELLRNVPREHPATKDPLLRVQEVLNGTEVNLQHLTALVDCRSLHLDYVQALTGFCYDGVEGLIYLALFSFVTALMFSSIVCSIPHTWQQKRGPDDDGEEETAPGPRQAHDSLYRVHMPSLYSCGSSYGSEASIPAAAHTVSNAPVTEYMSQNANFQNPRCENTPLIGRESPPPSYTSSMRAKYLATSQPRPDSSGSGH.

Topologically, residues 1 to 42 (MAGVSYAAPWWVSLLHRLPHFDLRWEATSSQFRPEDADYQQA) are extracellular. Residues 43–63 (LLLLGATALACLALDLLFLLF) form a helical membrane-spanning segment. Over 64-86 (YSFWLCCRRRKTDEHLDADCCCT) the chain is Cytoplasmic. Residues 87 to 107 (AWCVIITTLVCSAGIAVGFYG) traverse the membrane as a helical segment. At 108–211 (NGETSDGIHR…VDLYDWYRWL (104 aa)) the chain is on the extracellular side. Residues E110 and D113 each contribute to the Ca(2+) site. N-linked (GlcNAc...) asparagine glycosylation is found at N126 and N144. The chain crosses the membrane as a helical span at residues 212–232 (GYLGLLLLDVIICLLVLVGLI). Residues 233–236 (RSSK) are Cytoplasmic-facing. The helical transmembrane segment at 237–257 (GILVGVCLLGVLALVISWGAL) threads the bilayer. Residues 258-386 (GLELAVSVGS…LTGFCYDGVE (129 aa)) are Extracellular-facing. Cystine bridges form between C271-C381 and C299-C366. Residue N351 is glycosylated (N-linked (GlcNAc...) asparagine). A helical transmembrane segment spans residues 387-407 (GLIYLALFSFVTALMFSSIVC). Residues 408–524 (SIPHTWQQKR…PRPDSSGSGH (117 aa)) are Cytoplasmic-facing. Disordered stretches follow at residues 413–435 (WQQKRGPDDDGEEETAPGPRQAH) and 485–524 (RCENTPLIGRESPPPSYTSSMRAKYLATSQPRPDSSGSGH). S496 bears the Phosphoserine mark. The short motif at 498-501 (PPSY) is the PY-motif; mediates interaction with NEDD4L element. Positions 501–524 (YTSSMRAKYLATSQPRPDSSGSGH) are enriched in polar residues. Phosphoserine occurs at positions 504 and 522.

Belongs to the tweety family. In terms of assembly, homotetramer; disulfide-linked. Forms cis-homodimers in the presence of Ca(2+). Interacts with NEDD4L. Post-translationally, ubiquitinated by NEDD4L. N-glycosylated. In terms of tissue distribution, expressed in excitable tissues. Expressed in the brain, heart, skeletal muscle, colon, spleen, kidney and peripheral blood leukocytes. Also expressed in fat, the pancreas, thymus, and uterus.

Its subcellular location is the cell membrane. The catalysed reaction is chloride(in) = chloride(out). It carries out the reaction L-glutamate(out) = L-glutamate(in). Inhibited by (4-[(2-butyl-6,7-dichloro-2- cyclopentyl-2,3-dihydro-1-oxo-1H-inden-5-yl)oxy]butanoic acid), genistein and PD98059 (MEK1 inhibitor). Its function is as follows. Calcium-independent, swelling-dependent volume-regulated anion channel (VRAC-swell) which plays a pivotal role in the process of regulatory volume decrease (RVD) in the brain through the efflux of anions like chloride and organic osmolytes like glutamate. Probable large-conductance Ca(2+)-activated chloride channel. This Mus musculus (Mouse) protein is Protein tweety homolog 3 (Ttyh3).